A 237-amino-acid polypeptide reads, in one-letter code: Ribonuclease PH (237 aa).

Residues Arg-86 and 124–126 each bind phosphate; that span reads GTR.

This sequence belongs to the RNase PH family. Homohexameric ring arranged as a trimer of dimers.

The catalysed reaction is tRNA(n+1) + phosphate = tRNA(n) + a ribonucleoside 5'-diphosphate. In terms of biological role, phosphorolytic 3'-5' exoribonuclease that plays an important role in tRNA 3'-end maturation. Removes nucleotide residues following the 3'-CCA terminus of tRNAs; can also add nucleotides to the ends of RNA molecules by using nucleoside diphosphates as substrates, but this may not be physiologically important. Probably plays a role in initiation of 16S rRNA degradation (leading to ribosome degradation) during starvation. This chain is Ribonuclease PH, found in Rhodopseudomonas palustris (strain HaA2).